The primary structure comprises 622 residues: Palmitoyltransferase ZDHHC13 (622 aa).

M1 carries the post-translational modification N-acetylmethionine. Topologically, residues 1 to 291 are cytoplasmic; the sequence is MEGPGLGSQC…RLWRWLQKCE (291 aa). ANK repeat units follow at residues 43–78, 81–110, 115–144, 148–177, 181–211, 216–245, and 249–277; these read PLIEDSSNCDIVKATQYGIFERCKELVEAGYDVRQP, ENVSLLHWAAINNRLDLVKFYISKGAVVDQ, LNSTPLHWAIRQGHLPMVILLLQHGADPTL, EGFSSIHLAVLFQHMPIIAYLISKGQSVNM, NGQTPLMLSAHKVIGPEPTGFLLKFNPSLNV, HQNTPLHWAVAAGNVNAVDKLLEAGSSLDI, and KGETPLDMALQNKNQLIIHMLKTEAKMRA. Residues 292–312 form a helical membrane-spanning segment; sequence LFLLLMLSVITMWAIGYILDF. At 313–320 the chain is on the lumenal side; the sequence is NSDSWLLK. Residues 321 to 341 form a helical membrane-spanning segment; the sequence is GCLLVTLFFLTSLFPRFLVGY. Over 342-347 the chain is Cytoplasmic; that stretch reads KNLVYL. A helical membrane pass occupies residues 348–368; that stretch reads PTAFLLSSVFWIFMTWFILFF. The Lumenal portion of the chain corresponds to 369–370; sequence PD. The chain crosses the membrane as a helical span at residues 371 to 391; it reads LAGAPFYFSFIFSIVAFLYFF. Topologically, residues 392-470 are cytoplasmic; the sequence is YKTWATDPGF…RCIGFGNHHY (79 aa). Residues 426–476 enclose the DHHC domain; that stretch reads TFCTSCLIRKPLRSLHCHVCNCCVARYDQHCLWTGRCIGFGNHHYYIFFLF. Catalysis depends on C456, which acts as the S-palmitoyl cysteine intermediate. Residues 471-491 form a helical membrane-spanning segment; it reads YIFFLFFLSMVCGWIIYGSFI. The Lumenal segment spans residues 492-518; the sequence is YLSSHCATTFKEDGLWTYLNQIVACSP. Residues 519-539 traverse the membrane as a helical segment; the sequence is WVLYILMLATFHFSWSTFLLL. Residues 540 to 622 lie on the Cytoplasmic side of the membrane; sequence NQLFQIAFLG…PAREKVLRSV (83 aa).

Belongs to the DHHC palmitoyltransferase family. AKR/ZDHHC17 subfamily. As to quaternary structure, interacts (via ANK repeats) with CLIP3. Interacts (via ANK repeats) with DNAJC5 (via C-terminus). Interacts (via ANK repeats) with HTT. Interacts (via ANK repeats) with MAP6. Interacts (via ANK repeats) with SNAP23. Interacts (via ANK repeats) with SNAP25. May interact (via ANK repeats) with SPRED2.

The protein localises to the golgi apparatus membrane. Its subcellular location is the cytoplasmic vesicle membrane. The enzyme catalyses L-cysteinyl-[protein] + hexadecanoyl-CoA = S-hexadecanoyl-L-cysteinyl-[protein] + CoA. Functionally, palmitoyltransferase that could catalyze the addition of palmitate onto various protein substrates. Palmitoyltransferase for HTT and GAD2. May play a role in Mg(2+) transport. In Homo sapiens (Human), this protein is Palmitoyltransferase ZDHHC13.